A 418-amino-acid polypeptide reads, in one-letter code: MHIFDELKERGLIFQTTDEEALRKALEEGQVSYYTGYDPTADSLHLGHLVAILTSRRLQLAGHKPYALVGGATGLIGDPSFKDAERSLQTKDTVDGWVKSIQGQLSRFLDFENGENKAVMVNNYDWFGSISFIDFLRDIGKYFTVNYMMSKESVKKRIETGISYTEFAYQIMQGYDFFVLNQDHNVTLQIGGSDQWGNMTAGTELLRRKADKTGHVITVPLITDATGKKFGKSEGNAVWLNPEKTSPYEMYQFWMNVMDADAVRFLKIFTFLSLDEIEDIRKQFEAAPHERLAQKVLAREVVTLVHGEEAYKEALNITEQLFAGNIKNLSVKELKQGLRGVPNYQVQADEHNNIVELLVSSGIVNSKRQAREDVQNGAIYVNGDRIQDLDYVLSDADKLENELTVIRRGKKKYFVLTY.

Residue tyrosine 34 participates in L-tyrosine binding. Residues 39 to 48 (PTADSLHLGH) carry the 'HIGH' region motif. 2 residues coordinate L-tyrosine: tyrosine 169 and glutamine 173. Positions 229-233 (KFGKS) match the 'KMSKS' region motif. Lysine 232 contributes to the ATP binding site. The region spanning 352–418 (NNIVELLVSS…GKKKYFVLTY (67 aa)) is the S4 RNA-binding domain.

Belongs to the class-I aminoacyl-tRNA synthetase family. TyrS type 1 subfamily. Homodimer.

The protein resides in the cytoplasm. It carries out the reaction tRNA(Tyr) + L-tyrosine + ATP = L-tyrosyl-tRNA(Tyr) + AMP + diphosphate + H(+). Functionally, catalyzes the attachment of tyrosine to tRNA(Tyr) in a two-step reaction: tyrosine is first activated by ATP to form Tyr-AMP and then transferred to the acceptor end of tRNA(Tyr). The chain is Tyrosine--tRNA ligase from Streptococcus pneumoniae (strain Taiwan19F-14).